We begin with the raw amino-acid sequence, 162 residues long: ATP synthase subunit delta, mitochondrial (162 aa).

A mitochondrion-targeting transit peptide spans 1–24 (MFSVARTAIRGAARPAVRIARRGY).

F-type ATP synthases have 2 components, the catalytic core F(1) and the membrane-embedded component F(0), linked together by a central stalk and a peripheral stalk. The central stalk, also called rotor shaft, is often seen as part of F(1). The peripheral stalk is seen as part of F(0). F(0) contains the membrane channel next to the rotor. F-type ATP synthases form dimers but each monomer functions independently in ATP generation. The dimer consists of 17 different polypeptides: ATP1 (subunit alpha, 3 molecules per monomer, part of F(1)), ATP2 (subunit beta, 3 copies per monomer, part of F(1)), ATP3 (subunit gamma, part of the central stalk), ATP4 (subunit b, part of the peripheral stalk), ATP5/OSCP (subunit 5/OSCP, part of the peripheral stalk), ATP6 (subunit a, part of the peripheral stalk), ATP7 (subunit d, part of the peripheral stalk), ATP8 (subunit 8, part of the peripheral stalk), OLI1 (subunit c, part of the rotor, 10 molecules per monomer), ATP14 (subunit h, part of the peripheral stalk), ATP15 (subunit epsilon, part of the central stalk), ATP16 (subunit delta, part of the central stalk), ATP17 (subunit f, part of the peripheral stalk), ATP18 (subunit i/j, part of the peripheral stalk), ATP19 (subunit k, dimer-specific, at interface between monomers), ATP20 (subunit g, at interface between monomers), TIM11 (subunit e, at interface between monomers).

Its subcellular location is the mitochondrion inner membrane. In terms of biological role, mitochondrial membrane ATP synthase (F(1)F(0) ATP synthase or Complex V) produces ATP from ADP in the presence of a proton gradient across the membrane which is generated by electron transport complexes of the respiratory chain. F-type ATP synthases consist of two structural domains, F(1) - containing the extramembraneous catalytic core, and F(0) - containing the membrane proton channel, linked together by a central stalk and a peripheral stalk. During catalysis, ATP synthesis in the catalytic domain of F(1) is coupled via a rotary mechanism of the central stalk subunits to proton translocation. Part of the complex F(1) domain and the central stalk which is part of the complex rotary element. Rotation of the central stalk against the surrounding alpha/ATP1(3)beta/ATP2(3) subunits leads to hydrolysis of ATP in three separate catalytic sites on the beta/ATP2 subunits. In Yarrowia lipolytica (strain CLIB 122 / E 150) (Yeast), this protein is ATP synthase subunit delta, mitochondrial.